The chain runs to 256 residues: Ribonuclease 3 (256 aa).

The region spanning 3 to 125 (LEALQQRLGY…IFGAVFLDGG (123 aa)) is the RNase III domain. Position 38 (Glu38) interacts with Mg(2+). Asp42 is a catalytic residue. Asp111 and Glu114 together coordinate Mg(2+). The active site involves Glu114. Residues 152 to 222 (DAKTLLQEYL…AKLALEEAHR (71 aa)) form the DRBM domain. A disordered region spans residues 227–256 (LVKRSRAERTGKTRKQATPPDPQLSLRLKE).

This sequence belongs to the ribonuclease III family. As to quaternary structure, homodimer. Mg(2+) is required as a cofactor.

The protein localises to the cytoplasm. The catalysed reaction is Endonucleolytic cleavage to 5'-phosphomonoester.. In terms of biological role, digests double-stranded RNA. Involved in the processing of primary rRNA transcript to yield the immediate precursors to the large and small rRNAs (23S and 16S). Processes some mRNAs, and tRNAs when they are encoded in the rRNA operon. Processes pre-crRNA and tracrRNA of type II CRISPR loci if present in the organism. The sequence is that of Ribonuclease 3 from Ralstonia nicotianae (strain ATCC BAA-1114 / GMI1000) (Ralstonia solanacearum).